The primary structure comprises 358 residues: uncharacterized protein (358 aa).

The segment at 1 to 47 (MGNVAGETRANVIPLHTNRSRVAARRRAGQRAESRQHPSLLSDPNDR) is disordered. Over residues 18–29 (NRSRVAARRRAG) the composition is skewed to basic residues.

It to M.leprae ML2427.

This is an uncharacterized protein from Mycobacterium tuberculosis (strain CDC 1551 / Oshkosh).